An 844-amino-acid polypeptide reads, in one-letter code: Protein translocase subunit SecA 1 (844 aa).

ATP contacts are provided by residues Gln91, Gly109–Thr113, and Asp498. The segment covering Lys793–Lys813 has biased composition (basic and acidic residues). The interval Lys793–Arg825 is disordered. Zn(2+)-binding residues include Cys829, Cys831, Cys840, and His841.

This sequence belongs to the SecA family. As to quaternary structure, monomer and homodimer. Part of the essential Sec protein translocation apparatus which comprises SecA, SecYEG and auxiliary proteins SecDF. Other proteins may also be involved. Zn(2+) serves as cofactor.

Its subcellular location is the cell membrane. The protein localises to the cytoplasm. The catalysed reaction is ATP + H2O + cellular proteinSide 1 = ADP + phosphate + cellular proteinSide 2.. Its function is as follows. Part of the Sec protein translocase complex. Interacts with the SecYEG preprotein conducting channel. Has a central role in coupling the hydrolysis of ATP to the transfer of proteins into and across the cell membrane, serving as an ATP-driven molecular motor driving the stepwise translocation of polypeptide chains across the membrane. This Staphylococcus epidermidis (strain ATCC 35984 / DSM 28319 / BCRC 17069 / CCUG 31568 / BM 3577 / RP62A) protein is Protein translocase subunit SecA 1.